The sequence spans 1274 residues: Myosin-binding protein C, cardiac-type (1274 aa).

The residue at position 1 (Met-1) is an N-acetylmethionine. Ser-47 is subject to Phosphoserine. The segment covering 107–141 (APAPAEATGAPGEAPAPAAELGESAPSPKGSSSAA) has biased composition (low complexity). The interval 107-153 (APAPAEATGAPGEAPAPAAELGESAPSPKGSSSAALNGPTPGAPDDP) is disordered. The region spanning 153 to 256 (PIGLFVMRPQ…FDCSNFNLTV (104 aa)) is the Ig-like C2-type 1 domain. Zn(2+) contacts are provided by Gln-208, His-210, Glu-223, and His-225. 3 positions are modified to phosphoserine; by PKA and PKC: Ser-275, Ser-284, and Ser-304. Ser-311 and Ser-427 each carry phosphoserine. Ig-like C2-type domains follow at residues 362–452 (STAF…VKEP), 453–543 (PVLI…VQEK), 544–633 (KLEV…HFME), and 645–771 (PKIH…VIDV). A disulfide bond links Cys-436 and Cys-443. Ser-550 carries the post-translational modification Phosphoserine. At Thr-607 the chain carries Phosphothreonine. 2 consecutive Fibronectin type-III domains span residues 774 to 870 (APAA…IGPP) and 872 to 967 (EPTH…VQEI). In terms of domain architecture, Ig-like C2-type 6 spans 971–1065 (PRLQLPRHLR…ATLVLQVVDK (95 aa)). Positions 1068–1163 (PPQDLRVTDA…TKEPVFIPRP (96 aa)) constitute a Fibronectin type-III 3 domain. In terms of domain architecture, Ig-like C2-type 7 spans 1181-1274 (PSFTQPLVNR…ECRLEVRVPQ (94 aa)). Position 1241 is an omega-N-methylarginine (Arg-1241).

It belongs to the immunoglobulin superfamily. MyBP family. In terms of processing, substrate for phosphorylation by PKA and PKC. Reversible phosphorylation appears to modulate contraction. Polyubiquitinated.

Thick filament-associated protein located in the crossbridge region of vertebrate striated muscle a bands. In vitro it binds MHC, F-actin and native thin filaments, and modifies the activity of actin-activated myosin ATPase. It may modulate muscle contraction or may play a more structural role. This chain is Myosin-binding protein C, cardiac-type (MYBPC3), found in Homo sapiens (Human).